A 347-amino-acid polypeptide reads, in one-letter code: RNA 3'-terminal phosphate cyclase (347 aa).

ATP-binding positions include Gln109 and 290 to 294 (YLADQ). His315 (tele-AMP-histidine intermediate) is an active-site residue.

It belongs to the RNA 3'-terminal cyclase family. Type 1 subfamily.

The protein resides in the cytoplasm. The enzyme catalyses a 3'-end 3'-phospho-ribonucleotide-RNA + ATP = a 3'-end 2',3'-cyclophospho-ribonucleotide-RNA + AMP + diphosphate. In terms of biological role, catalyzes the conversion of 3'-phosphate to a 2',3'-cyclic phosphodiester at the end of RNA. The mechanism of action of the enzyme occurs in 3 steps: (A) adenylation of the enzyme by ATP; (B) transfer of adenylate to an RNA-N3'P to produce RNA-N3'PP5'A; (C) and attack of the adjacent 2'-hydroxyl on the 3'-phosphorus in the diester linkage to produce the cyclic end product. The biological role of this enzyme is unknown but it is likely to function in some aspects of cellular RNA processing. The chain is RNA 3'-terminal phosphate cyclase from Ralstonia nicotianae (strain ATCC BAA-1114 / GMI1000) (Ralstonia solanacearum).